The chain runs to 741 residues: NAD(P)H-quinone oxidoreductase subunit 5, chloroplastic (741 aa).

Helical transmembrane passes span 9–29, 40–60, 89–109, 122–139, 147–167, 185–205, 219–239, 258–278, 280–300, 396–416, 425–445, 544–564, 603–623, and 719–739; these read WIIP…LLLV, WAFP…DLSI, IDPL…MVLI, LRFF…LGLV, IHIF…FWFT, GDFG…SLEF, NGVN…GAVA, TPIS…FLVA, LLPI…LGII, TTFL…CFWS, WLYS…TAFY, LFPL…GIPF, IYSV…YGSV, and YLFV…FYFL.

The protein belongs to the complex I subunit 5 family. NDH is composed of at least 16 different subunits, 5 of which are encoded in the nucleus.

It is found in the plastid. The protein localises to the chloroplast thylakoid membrane. The enzyme catalyses a plastoquinone + NADH + (n+1) H(+)(in) = a plastoquinol + NAD(+) + n H(+)(out). The catalysed reaction is a plastoquinone + NADPH + (n+1) H(+)(in) = a plastoquinol + NADP(+) + n H(+)(out). In terms of biological role, NDH shuttles electrons from NAD(P)H:plastoquinone, via FMN and iron-sulfur (Fe-S) centers, to quinones in the photosynthetic chain and possibly in a chloroplast respiratory chain. The immediate electron acceptor for the enzyme in this species is believed to be plastoquinone. Couples the redox reaction to proton translocation, and thus conserves the redox energy in a proton gradient. The sequence is that of NAD(P)H-quinone oxidoreductase subunit 5, chloroplastic (ndhF) from Liriodendron tulipifera (Tuliptree).